The sequence spans 277 residues: uncharacterized protein (277 aa).

The disordered stretch occupies residues H256–S277.

In terms of biological role, this protein may be involved in virus assembly. Essential for virus function. This is an uncharacterized protein from Saccharolobus solfataricus (Sulfolobus solfataricus).